The following is a 248-amino-acid chain: MSVSPVAIVSTPVAAPESSAAVAVPPVVVRWRGVEPYETSFDAMRAFTDARTADTVDEIWIVEHPPVYTLGQAGDPAHLLVGDSGIPLVKVDRGGQITYHGPGQIVAYLLLDLRRRKLTVRTLVTKIEEAVIETLAAYNLASVRKAGAPGIYVASGVHEGAKIAALGLKIRNGCSYHGLSLNVKMDLRPFLAINPCGYAGLETVDMASLEVAADWNDVARTLVRRLIANLDGESAAADTPHALEHSND.

The 182-residue stretch at 53–234 folds into the BPL/LPL catalytic domain; it reads ADTVDEIWIV…RLIANLDGES (182 aa). Residues 93–100, 165–167, and 178–180 contribute to the substrate site; these read RGGQITYH, ALG, and GLS. Cysteine 196 serves as the catalytic Acyl-thioester intermediate.

The protein belongs to the LipB family.

The protein resides in the cytoplasm. The enzyme catalyses octanoyl-[ACP] + L-lysyl-[protein] = N(6)-octanoyl-L-lysyl-[protein] + holo-[ACP] + H(+). The protein operates within protein modification; protein lipoylation via endogenous pathway; protein N(6)-(lipoyl)lysine from octanoyl-[acyl-carrier-protein]: step 1/2. Catalyzes the transfer of endogenously produced octanoic acid from octanoyl-acyl-carrier-protein onto the lipoyl domains of lipoate-dependent enzymes. Lipoyl-ACP can also act as a substrate although octanoyl-ACP is likely to be the physiological substrate. This chain is Octanoyltransferase, found in Burkholderia multivorans (strain ATCC 17616 / 249).